The chain runs to 321 residues: Methionyl-tRNA formyltransferase (321 aa).

Residue 112–115 (SILP) participates in (6S)-5,6,7,8-tetrahydrofolate binding.

This sequence belongs to the Fmt family.

The catalysed reaction is L-methionyl-tRNA(fMet) + (6R)-10-formyltetrahydrofolate = N-formyl-L-methionyl-tRNA(fMet) + (6S)-5,6,7,8-tetrahydrofolate + H(+). Its function is as follows. Attaches a formyl group to the free amino group of methionyl-tRNA(fMet). The formyl group appears to play a dual role in the initiator identity of N-formylmethionyl-tRNA by promoting its recognition by IF2 and preventing the misappropriation of this tRNA by the elongation apparatus. The polypeptide is Methionyl-tRNA formyltransferase (Shewanella pealeana (strain ATCC 700345 / ANG-SQ1)).